The sequence spans 251 residues: Adapter protein MecA (251 aa).

The protein belongs to the MecA family. As to quaternary structure, homodimer.

Its function is as follows. Enables the recognition and targeting of unfolded and aggregated proteins to the ClpC protease or to other proteins involved in proteolysis. The chain is Adapter protein MecA from Streptococcus agalactiae serotype III (strain NEM316).